A 360-amino-acid chain; its full sequence is Phospho-N-acetylmuramoyl-pentapeptide-transferase (360 aa).

10 helical membrane passes run 25-45, 73-93, 97-117, 135-155, 170-190, 199-219, 236-256, 263-283, 288-308, and 338-358; these read RGILGVLTALTLSLCLGPWMI, TMGGALILSSIGISTLLWADL, YVWVVLLVTFLFGAIGWVDDY, FWQSVFGLCAAIFLYTTAPSA, IPLGIGFIVLTYFVIVGSSNA, GLAIMPTVMVGGALGIFCYLS, AGELIVFSGALIGAGLGFLWF, VFMGDVGALALGAALGTMAVI, MVLFIMGGVFVMETLSVVIQV, and VIVRFWIITVILVLIGLATLK.

This sequence belongs to the glycosyltransferase 4 family. MraY subfamily. The cofactor is Mg(2+).

The protein localises to the cell inner membrane. It catalyses the reaction UDP-N-acetyl-alpha-D-muramoyl-L-alanyl-gamma-D-glutamyl-meso-2,6-diaminopimeloyl-D-alanyl-D-alanine + di-trans,octa-cis-undecaprenyl phosphate = di-trans,octa-cis-undecaprenyl diphospho-N-acetyl-alpha-D-muramoyl-L-alanyl-D-glutamyl-meso-2,6-diaminopimeloyl-D-alanyl-D-alanine + UMP. It functions in the pathway cell wall biogenesis; peptidoglycan biosynthesis. In terms of biological role, catalyzes the initial step of the lipid cycle reactions in the biosynthesis of the cell wall peptidoglycan: transfers peptidoglycan precursor phospho-MurNAc-pentapeptide from UDP-MurNAc-pentapeptide onto the lipid carrier undecaprenyl phosphate, yielding undecaprenyl-pyrophosphoryl-MurNAc-pentapeptide, known as lipid I. The protein is Phospho-N-acetylmuramoyl-pentapeptide-transferase of Pseudomonas syringae pv. syringae (strain B728a).